A 798-amino-acid chain; its full sequence is uncharacterized protein (798 aa).

A disordered region spans residues 432 to 573 (KLTDNLSNKS…KNKAYRGRRV (142 aa)). Low complexity-rich tracts occupy residues 438-449 (SNKSSNDNTSET), 456-465 (RSSNSRNSDN), 473-487 (SKTQ…SRIP), and 495-510 (STNS…SDVY). The segment covering 519 to 529 (PSRSTYKSRTI) has biased composition (polar residues). Residues 535–547 (ESSPVSSRTSSPV) show a composition bias toward low complexity. Residues 548 to 562 (DDSRLKQSRISEDKP) show a composition bias toward basic and acidic residues. The segment covering 563-572 (RKNKAYRGRR) has biased composition (basic residues).

It localises to the virion. This is an uncharacterized protein from Acanthamoeba polyphaga (Amoeba).